A 99-amino-acid chain; its full sequence is Ubiquitin-related modifier 1 homolog (99 aa).

A 1-thioglycine modification is found at Gly-99. Gly-99 participates in a covalent cross-link: Glycyl lysine isopeptide (Gly-Lys) (interchain with K-? in acceptor proteins).

It belongs to the URM1 family. Interacts with cer. In terms of processing, C-terminal thiocarboxylation occurs in 2 steps, it is first acyl-adenylated (-COAMP) via the hesA/moeB/thiF part of the MOCS3 homolog, then thiocarboxylated (-COSH) via the rhodanese domain of the MOCS3 homolog.

The protein localises to the cytoplasm. It functions in the pathway tRNA modification; 5-methoxycarbonylmethyl-2-thiouridine-tRNA biosynthesis. Its function is as follows. Acts as a sulfur carrier required for 2-thiolation of mcm(5)S(2)U at tRNA wobble positions of cytosolic tRNA(Lys), tRNA(Glu) and tRNA(Gln). Serves as sulfur donor in tRNA 2-thiolation reaction by being thiocarboxylated (-COSH) at its C-terminus by MOCS3. The sulfur is then transferred to tRNA to form 2-thiolation of mcm(5)S(2)U. Also acts as a ubiquitin-like protein (UBL) that is covalently conjugated via an isopeptide bond to lysine residues of target proteins such as Prx2/Jafrac1, Ciao1, Eip71CD and GILT1. The thiocarboxylated form serves as substrate for conjugation and oxidative stress specifically induces the formation of UBL-protein conjugates. This chain is Ubiquitin-related modifier 1 homolog, found in Drosophila virilis (Fruit fly).